The chain runs to 490 residues: Probable glycine dehydrogenase (decarboxylating) subunit 2 (490 aa).

K273 carries the N6-(pyridoxal phosphate)lysine modification.

It belongs to the GcvP family. C-terminal subunit subfamily. As to quaternary structure, the glycine cleavage system is composed of four proteins: P, T, L and H. In this organism, the P 'protein' is a heterodimer of two subunits. Pyridoxal 5'-phosphate serves as cofactor.

It catalyses the reaction N(6)-[(R)-lipoyl]-L-lysyl-[glycine-cleavage complex H protein] + glycine + H(+) = N(6)-[(R)-S(8)-aminomethyldihydrolipoyl]-L-lysyl-[glycine-cleavage complex H protein] + CO2. Its function is as follows. The glycine cleavage system catalyzes the degradation of glycine. The P protein binds the alpha-amino group of glycine through its pyridoxal phosphate cofactor; CO(2) is released and the remaining methylamine moiety is then transferred to the lipoamide cofactor of the H protein. In Staphylococcus aureus (strain Mu50 / ATCC 700699), this protein is Probable glycine dehydrogenase (decarboxylating) subunit 2.